A 68-amino-acid chain; its full sequence is Conotoxin mr3g (68 aa).

An N-terminal signal peptide occupies residues 1–19; that stretch reads MSKLGVLLTICLLLFALTA. Positions 20–51 are excised as a propeptide; that stretch reads VPLDGDQPADRPAERMQDDISSERHPMFDAVR. Disulfide bonds link C53-C67, C54-C63, and C59-C66. P55 and P65 each carry 4-hydroxyproline. C67 carries the post-translational modification Cysteine amide.

In terms of tissue distribution, expressed by the venom duct.

Its subcellular location is the secreted. Functionally, intracranially injection into mice does not elicit symptoms. The sequence is that of Conotoxin mr3g from Conus marmoreus (Marble cone).